Reading from the N-terminus, the 204-residue chain is Large ribosomal subunit protein uL22m (204 aa).

A mitochondrion-targeting transit peptide spans 1–27 (MAASITASVWGTLLKIHRGLTASGCLP).

The protein belongs to the universal ribosomal protein uL22 family. In terms of assembly, component of the mitochondrial ribosome large subunit (39S) which comprises a 16S rRNA and about 50 distinct proteins.

The protein localises to the mitochondrion. This is Large ribosomal subunit protein uL22m (mrpl22) from Xenopus tropicalis (Western clawed frog).